The primary structure comprises 371 residues: Succinyl-diaminopimelate desuccinylase (371 aa).

Zn(2+) is bound at residue H68. Residue D70 is part of the active site. D99 is a binding site for Zn(2+). The active-site Proton acceptor is E130. Zn(2+)-binding residues include E131, E159, and H344.

Belongs to the peptidase M20A family. DapE subfamily. Homodimer. Zn(2+) is required as a cofactor. Requires Co(2+) as cofactor.

It carries out the reaction N-succinyl-(2S,6S)-2,6-diaminopimelate + H2O = (2S,6S)-2,6-diaminopimelate + succinate. The protein operates within amino-acid biosynthesis; L-lysine biosynthesis via DAP pathway; LL-2,6-diaminopimelate from (S)-tetrahydrodipicolinate (succinylase route): step 3/3. In terms of biological role, catalyzes the hydrolysis of N-succinyl-L,L-diaminopimelic acid (SDAP), forming succinate and LL-2,6-diaminopimelate (DAP), an intermediate involved in the bacterial biosynthesis of lysine and meso-diaminopimelic acid, an essential component of bacterial cell walls. The protein is Succinyl-diaminopimelate desuccinylase of Acidiphilium cryptum (strain JF-5).